Here is a 565-residue protein sequence, read N- to C-terminus: Coiled-coil domain-containing protein 17 (565 aa).

The tract at residues I58–E87 is disordered. 2 coiled-coil regions span residues A97–A160 and L219–S271.

The protein is Coiled-coil domain-containing protein 17 (Ccdc17) of Mus musculus (Mouse).